The following is a 70-amino-acid chain: Putative membrane protein insertion efficiency factor (70 aa).

Belongs to the UPF0161 family.

It localises to the cell inner membrane. Could be involved in insertion of integral membrane proteins into the membrane. This chain is Putative membrane protein insertion efficiency factor, found in Rhizorhabdus wittichii (strain DSM 6014 / CCUG 31198 / JCM 15750 / NBRC 105917 / EY 4224 / RW1) (Sphingomonas wittichii).